Here is a 364-residue protein sequence, read N- to C-terminus: Phosphoserine aminotransferase (364 aa).

Arg46 provides a ligand contact to L-glutamate. Pyridoxal 5'-phosphate is bound by residues 80–81, Trp106, Thr157, Asp176, and Gln199; that span reads AR. An N6-(pyridoxal phosphate)lysine modification is found at Lys200. 241–242 serves as a coordination point for pyridoxal 5'-phosphate; the sequence is NT.

The protein belongs to the class-V pyridoxal-phosphate-dependent aminotransferase family. SerC subfamily. As to quaternary structure, homodimer. The cofactor is pyridoxal 5'-phosphate.

The protein localises to the cytoplasm. It catalyses the reaction O-phospho-L-serine + 2-oxoglutarate = 3-phosphooxypyruvate + L-glutamate. It carries out the reaction 4-(phosphooxy)-L-threonine + 2-oxoglutarate = (R)-3-hydroxy-2-oxo-4-phosphooxybutanoate + L-glutamate. Its pathway is amino-acid biosynthesis; L-serine biosynthesis; L-serine from 3-phospho-D-glycerate: step 2/3. It participates in cofactor biosynthesis; pyridoxine 5'-phosphate biosynthesis; pyridoxine 5'-phosphate from D-erythrose 4-phosphate: step 3/5. Its function is as follows. Catalyzes the reversible conversion of 3-phosphohydroxypyruvate to phosphoserine and of 3-hydroxy-2-oxo-4-phosphonooxybutanoate to phosphohydroxythreonine. This chain is Phosphoserine aminotransferase, found in Vibrio vulnificus (strain CMCP6).